The primary structure comprises 490 residues: Cytochrome P450 71A21 (490 aa).

The helical transmembrane segment at 1–21 threads the bilayer; that stretch reads MESMTMIILQSLIIFITILFF. C432 is a heme binding site.

This sequence belongs to the cytochrome P450 family. Heme is required as a cofactor.

It is found in the membrane. This chain is Cytochrome P450 71A21 (CYP71A21), found in Arabidopsis thaliana (Mouse-ear cress).